Reading from the N-terminus, the 373-residue chain is Hydrogenase maturation factor HypD (373 aa).

Fe cation-binding residues include Cys41, Cys69, and Cys72.

Belongs to the HypD family. In terms of assembly, monomer. Interacts with HypC. Forms a complex with HypC, or HybG, and HypE. The cofactor is [4Fe-4S] cluster.

It participates in protein modification; [NiFe] hydrogenase maturation. Its function is as follows. Involved in the maturation of [NiFe] hydrogenases. Involved in the biosynthesis of the Fe(CN)(2)CO cofactor. HypD may act as a scaffold on which the Fe(CN)(2)CO cofactor is formed. In complex with HypC, accepts the cyanide ligand generated by HypF and HypE, and also coordinates the carbon monoxide ligand. Required for the formation of all three hydrogenase isoenzymes. The protein is Hydrogenase maturation factor HypD of Escherichia coli (strain K12).